The primary structure comprises 304 residues: E3 ubiquitin-protein ligase RNF144B (304 aa).

The tract at residues 27-245 is TRIAD supradomain; the sequence is PLVTCKLCLC…YDRGPCRNKL (219 aa). 14 residues coordinate Zn(2+): cysteine 31, cysteine 34, cysteine 54, cysteine 57, cysteine 122, cysteine 127, cysteine 146, cysteine 149, cysteine 154, cysteine 157, histidine 162, cysteine 167, cysteine 194, and cysteine 197. An RING-type 1 zinc finger spans residues 31-81; the sequence is CKLCLCEQSLDKMTTLQECRCIFCTACLKQYMQLAIREGCGSPITCPDMVC. An IBR-type zinc finger spans residues 102–167; it reads QLYQRLKFER…KDAWHAEVSC (66 aa). The RING-type 2; atypical zinc-finger motif lies at 194–223; sequence CPVCRVYIERNEGCAQMMCKNCKHTFCWYC. Cysteine 207 is an active-site residue. The Zn(2+) site is built by cysteine 212, cysteine 215, cysteine 220, cysteine 223, histidine 235, and cysteine 241. Residues 259-279 form a helical membrane-spanning segment; sequence VVGILVGLGIIALVTSPLLLL.

This sequence belongs to the RBR family. RNF144 subfamily. As to quaternary structure, interacts with UBE2L3, UBE2L6 and LCMT2, as well as with BAX. Interacts with TBK1; this interaction inhibits TBK1 phosphorylation and 'Lys-63'-linked polyubiquitination. Auto-ubiquitinated.

The protein localises to the mitochondrion membrane. It is found in the cytoplasm. It catalyses the reaction [E2 ubiquitin-conjugating enzyme]-S-ubiquitinyl-L-cysteine + [acceptor protein]-L-lysine = [E2 ubiquitin-conjugating enzyme]-L-cysteine + [acceptor protein]-N(6)-ubiquitinyl-L-lysine.. It functions in the pathway protein modification; protein ubiquitination. Functionally, E3 ubiquitin-protein ligase which accepts ubiquitin from E2 ubiquitin-conjugating enzymes UBE2L3 and UBE2L6 in the form of a thioester and then directly transfers the ubiquitin to targeted substrates such as LCMT2, thereby promoting their degradation. Induces apoptosis via a p53/TP53-dependent but caspase-independent mechanism. Plays a crucial role in maintaining the genomic stability by controlling the degradation of multiple proteins involved in mitotic progression and DNA damage. Regulates epithelial homeostasis by mediating degradation of CDKN1A and isoform 2 of TP63. Plays a regulatory role in innate immunity by negatively regulating IRF3 activation and IFN-beta production. Mechanistically, inhibits TBK1 phosphorylation and 'Lys-63'-linked polyubiquitination independently of its E3 ligase activity. Alternatively, promotes 'Lys-27' and 'Lys-33'-linked ubiquitination of IFIH1/MDA5, promoting selective autophagic degradation of IFIH1/MDA5 to inhibit antiviral response. This chain is E3 ubiquitin-protein ligase RNF144B (RNF144B), found in Bos taurus (Bovine).